The primary structure comprises 163 residues: Homoaconitase small subunit (163 aa).

Belongs to the LeuD family. Heterodimer of HacA and HacB.

The catalysed reaction is (2R,3S)-homoisocitrate = cis-homoaconitate + H2O. The protein operates within amino-acid biosynthesis; L-lysine biosynthesis via AAA pathway; L-alpha-aminoadipate from 2-oxoglutarate: step 3/5. Its activity is regulated as follows. Is not inhibited by lysine. Its function is as follows. Catalyzes the reversible hydration of cis-homoaconitate ((Z)-but-1-ene-1,2,4-tricarboxylate) to homoisocitrate ((1R,2S)-1-hydroxybutane-1,2,4-tricarboxylate). Can catalyze neither the dehydration of (R)-homocitrate ((2R)-2-hydroxybutane-1,2,4-tricarboxylate) into cis-homoaconitate in vitro, nor the reverse reaction. Is not active toward (S)-homocitrate, cis-aconitate or citrate as substrate. The polypeptide is Homoaconitase small subunit (hacB) (Thermus thermophilus (strain ATCC BAA-163 / DSM 7039 / HB27)).